Consider the following 979-residue polypeptide: MLRRPAPALAPAVRLLLAGLLCGGGVWAARVNKHKPWLEPTYHGIVTENDNTVLLDPPLIALDKDSPLRFAESFEVTVTKEGEICGFKIHGQNVPFDAVVVDKSTGEGIIRSKEKLDCELQKDYTFTIQAYDCGKGPDGTGVKKSHKATVHIQVNDVNEYAPVFKEKSYKAAVVEGKQHSSILRVEAVDADCSPQFSQICSYEILTPDVPFTVDKDGYIKNTEKLNYGKEHQYKLTVTAYDCGKKRATEDVLVKISVKPTCSPGWQGWSSRIEYEPGTGALAVFPSIHLETCDEPVASVQATVELETSHIGKGCDRDTYSEKSLHRLCGAAAGTSELLPSPSSSFNWTVGLPTDNGHDSDQVFEFNGTQAVRIPDGVVTLDPKEPFTISVWMRHGPFGRKKETILCSSDKTDMNRHHYSLYVHGCRLVFLLRQDPSEEKKYRPAEFHWKLNQVCDEDWHHFVLNVEVPSVTLYVDGIPHEPFSVTEDYPLHPTKIETQLVVGACWQEYSGVESGNETEPATMASAGGDLHMTQFFRGNLAGLTVRSGKLADKKVIDCLYTCKEGLDLQVPEDANRGVQIQASSSQAVLTLEGDNVGELDKAMQHISYLNSRQFPTPGIRRLKITSTVKCFNEAACIEVPPVEGYVMVLQPEEPKISLSGVHHFARAASEFESAEGISLFPELRIISTITREVEPEADGSEDPTVQESLVSEEIVHDLDTCEVTVEGDELNAEQESLEVDVTRLQQKGIEASHSDLGVVFTGVETMASYEEVLHLLRYRNWHTRSLLDRKFKLICSELNGRYLSNEFKVEVNVIHTANPVEHANHMAAQPQFVHPEHRSFVDLSGHNLANPHPFAVVPSTATVVIVVCVSFLVFMIILGVFRIRAAHQRTMRDQDTGKENEMDWDDSALTITVNPMETYEDQHSSEEEEEEEEEEESEDGEEEEDITSAESESSEEEEGGPGDGQNATRQLEWDDSTLSY.

Positions 1 to 28 (MLRRPAPALAPAVRLLLAGLLCGGGVWA) are cleaved as a signal peptide. At 29 to 859 (ARVNKHKPWL…PHPFAVVPST (831 aa)) the chain is on the extracellular side. Cadherin domains lie at 38–164 (LEPT…APVF) and 165–265 (KEKS…SPGW). N-linked (GlcNAc...) asparagine glycosylation is found at Asn-346, Asn-366, and Asn-515. A helical transmembrane segment spans residues 860–880 (ATVVIVVCVSFLVFMIILGVF). Residues 881 to 979 (RIRAAHQRTM…LEWDDSTLSY (99 aa)) are Cytoplasmic-facing. The tract at residues 915–979 (METYEDQHSS…LEWDDSTLSY (65 aa)) is disordered. Residues 925–959 (EEEEEEEEEEESEDGEEEEDITSAESESSEEEEGG) show a composition bias toward acidic residues.

Belongs to the calsyntenin family. In terms of assembly, directly interacts with APBA2. Forms a tripartite complex with APBA2 and APP. The CTF1 chain interacts with PSEN1. Interacts with KLC1 and APBB1. As to quaternary structure, interacts with APBB1; this interaction stabilizes AlcICD metabolism. Interacts with PSEN1. Post-translationally, proteolytically processed under normal cellular conditions. A primary zeta-cleavage generates a large extracellular (soluble) N-terminal domain (sAlc) and a short C-terminal transmembrane fragment (CTF1). A secondary cleavage catalyzed by presenilin gamma-secretase within the transmembrane domain releases the beta-Alc-alpha chain in the extracellular milieu and produces an intracellular fragment (AlcICD). Beta-Alc-alpha secretion is largely dependent upon PSEN1 and PSEN2. This processing is strongly suppressed in the tripartite complex formed with APBA2 and APP, which seems to prevent the association with PSEN1. Highly expressed in the brain (at protein level), with over 90% of the neurons expressing detectable amounts. In the brain, relatively high levels in the cerebral cortex, striatum, hippocampus and thalamus. Moderate levels in the cerebellum. Low levels in the olfactory bulb, midbrain and pons (at protein level). Not detected in Purkinje cells. Expressed at low levels in the lung (at protein level). At the mRNA level, weakly detected in the kidney, lung, skeletal muscle, heart and testis. Not expressed in the sciatic nerve fiber.

Its subcellular location is the postsynaptic cell membrane. The protein localises to the endoplasmic reticulum membrane. The protein resides in the golgi apparatus membrane. It localises to the cell projection. It is found in the neuron projection. Its subcellular location is the vesicle. The protein localises to the nucleus. Functionally, postsynaptic adhesion molecule that binds to presynaptic neurexins to mediate both excitatory and inhibitory synapse formation. Promotes synapse development by acting as a cell adhesion molecule at the postsynaptic membrane, which associates with neurexin-alpha at the presynaptic membrane. Also functions as a cargo in axonal anterograde transport by acting as a molecular adapter that promotes KLC1 association with vesicles. Complex formation with APBA2 and APP, stabilizes APP metabolism and enhances APBA2-mediated suppression of beta-APP40 secretion, due to the retardation of intracellular APP maturation. In terms of biological role, as intracellular fragment AlcICD, suppresses APBB1-dependent transactivation stimulated by APP C-terminal intracellular fragment (AICD), most probably by competing with AICD for APBB1-binding. In complex with APBA2 and C99, a C-terminal APP fragment, abolishes C99 interaction with PSEN1 and thus APP C99 cleavage by gamma-secretase, most probably through stabilization of the direct interaction between APBA2 and APP. The polypeptide is Calsyntenin-1 (Mus musculus (Mouse)).